The primary structure comprises 332 residues: 2,3-diketo-L-gulonate reductase (332 aa).

The Proton donor role is filled by His44. Residues 168-174 (ITMVDMS), 224-225 (WK), and 304-306 (GHE) contribute to the NAD(+) site.

The protein belongs to the LDH2/MDH2 oxidoreductase family. DlgD subfamily. Homodimer.

It is found in the cytoplasm. The catalysed reaction is 3-dehydro-L-gulonate + NAD(+) = 2,3-dioxo-L-gulonate + NADH + H(+). It catalyses the reaction 3-dehydro-L-gulonate + NADP(+) = 2,3-dioxo-L-gulonate + NADPH + H(+). In terms of biological role, catalyzes the reduction of 2,3-diketo-L-gulonate in the presence of NADH, to form 3-keto-L-gulonate. In Escherichia coli O127:H6 (strain E2348/69 / EPEC), this protein is 2,3-diketo-L-gulonate reductase.